The sequence spans 172 residues: RNA pyrophosphohydrolase (172 aa).

The Nudix hydrolase domain maps to 8–153 (QHRPNVGVVL…KRGVYEAVVA (146 aa)). Positions 43–64 (GGVDEGEDLEVAARRELAEETG) match the Nudix box motif.

It belongs to the Nudix hydrolase family. RppH subfamily. A divalent metal cation serves as cofactor.

In terms of biological role, accelerates the degradation of transcripts by removing pyrophosphate from the 5'-end of triphosphorylated RNA, leading to a more labile monophosphorylated state that can stimulate subsequent ribonuclease cleavage. In Caulobacter vibrioides (strain ATCC 19089 / CIP 103742 / CB 15) (Caulobacter crescentus), this protein is RNA pyrophosphohydrolase.